Here is a 519-residue protein sequence, read N- to C-terminus: Berghepain-1 (519 aa).

Residues 1 to 32 (MINDIRRINITTSSIESLNENSKYLKRNHKRT) lie on the Cytoplasmic side of the membrane. The helical; Signal-anchor for type II membrane protein transmembrane segment at 33 to 53 (IKICAYAITTFALFFIVVVYF) threads the bilayer. Residues 54-519 (KNQTNVNDAN…IGIDVFFPIL (466 aa)) lie on the Lumenal side of the membrane. N-linked (GlcNAc...) asparagine glycans are attached at residues Asn-55 and Asn-143. 4 cysteine pairs are disulfide-bonded: Cys-298-Cys-340, Cys-333-Cys-373, Cys-358-Cys-378, and Cys-427-Cys-508. Cys-301 is an active-site residue. Asn-432 carries N-linked (GlcNAc...) asparagine glycosylation. Residues His-433 and Asn-483 contribute to the active site.

It belongs to the peptidase C1 family.

The protein resides in the membrane. Functionally, cysteine protease. Required for host hepatocyte-derived merozoite infectivity and to a lesser extent for host erythrocyte-derived merozoite infectivity. This is Berghepain-1 from Plasmodium berghei (strain Anka).